The sequence spans 105 residues: Met repressor (105 aa).

Belongs to the MetJ family. As to quaternary structure, homodimer.

It is found in the cytoplasm. This regulatory protein, when combined with SAM (S-adenosylmethionine) represses the expression of the methionine regulon and of enzymes involved in SAM synthesis. The chain is Met repressor from Haemophilus influenzae (strain 86-028NP).